The primary structure comprises 160 residues: uncharacterized protein (160 aa).

An RING-type zinc finger spans residues 8–46 (CAVCLDFFVEPCIIECGHSYCRFCIESHLNINEKCPLCR).

This is an uncharacterized protein from Caenorhabditis elegans.